Consider the following 149-residue polypeptide: Nucleoside diphosphate kinase (149 aa).

Residues Lys-9, Phe-57, Arg-85, Thr-91, Arg-102, and Asn-112 each coordinate ATP. The active-site Pros-phosphohistidine intermediate is His-115.

This sequence belongs to the NDK family. In terms of assembly, homotetramer. The cofactor is Mg(2+).

It is found in the cytoplasm. The enzyme catalyses a 2'-deoxyribonucleoside 5'-diphosphate + ATP = a 2'-deoxyribonucleoside 5'-triphosphate + ADP. It catalyses the reaction a ribonucleoside 5'-diphosphate + ATP = a ribonucleoside 5'-triphosphate + ADP. Major role in the synthesis of nucleoside triphosphates other than ATP. The ATP gamma phosphate is transferred to the NDP beta phosphate via a ping-pong mechanism, using a phosphorylated active-site intermediate. The chain is Nucleoside diphosphate kinase from Roseiflexus sp. (strain RS-1).